Reading from the N-terminus, the 445-residue chain is mRNA cleavage and polyadenylation factor CLP1 (445 aa).

Residues E33 and 131–136 (SSGKTS) contribute to the ATP site.

The protein belongs to the Clp1 family. Clp1 subfamily. As to quaternary structure, component of a pre-mRNA cleavage factor complex. Interacts directly with PCF11.

The protein resides in the nucleus. Its function is as follows. Required for endonucleolytic cleavage during polyadenylation-dependent pre-mRNA 3'-end formation. The polypeptide is mRNA cleavage and polyadenylation factor CLP1 (Eremothecium gossypii (strain ATCC 10895 / CBS 109.51 / FGSC 9923 / NRRL Y-1056) (Yeast)).